Reading from the N-terminus, the 977-residue chain is Kinesin-like protein KIN-7L, chloroplastic (977 aa).

Over residues 1 to 12 the composition is skewed to polar residues; sequence MGSKQVSKTRNG. Positions 1–66 are disordered; sequence MGSKQVSKTR…PPKPLQSKEN (66 aa). Low complexity-rich tracts occupy residues 22-31 and 38-54; these read SSASSTTSSS and SVDS…RSKP. Residues 66–385 enclose the Kinesin motor domain; that stretch reads NVTVTVRFRP…LKFAHRAKHI (320 aa). An ATP-binding site is contributed by 146–153; that stretch reads GVTSSGKT. The stretch at 386-471 forms a coiled coil; it reads EIQAAQNKII…LTKLILVSNK (86 aa). The interval 549–589 is disordered; the sequence is DSSLGGSSLSDKSSAVKSNSTPSTPQGEGSDFHTESRLSEG. Residues 551 to 561 show a composition bias toward low complexity; the sequence is SLGGSSLSDKS. The span at 563 to 575 shows a compositional bias: polar residues; the sequence is AVKSNSTPSTPQG. 2 coiled-coil regions span residues 626 to 688 and 732 to 942; these read MEIL…GKQI and IQEQ…LENE. Positions 864–876 are enriched in polar residues; it reads SSVTTPQGKTGNL. Disordered stretches follow at residues 864–891 and 958–977; these read SSVT…KEQE and AANS…HFGT. A compositionally biased stretch (basic and acidic residues) spans 879–891; it reads GRRESVSKRKEQE. Residues 958–967 show a composition bias toward polar residues; the sequence is AANSGLSDSV. The span at 968 to 977 shows a compositional bias: basic and acidic residues; the sequence is SETRIEHFGT.

This sequence belongs to the TRAFAC class myosin-kinesin ATPase superfamily. Kinesin family. KIN-7 subfamily.

It localises to the plastid. The protein resides in the chloroplast. This is Kinesin-like protein KIN-7L, chloroplastic from Arabidopsis thaliana (Mouse-ear cress).